The chain runs to 216 residues: Oligoribonuclease (216 aa).

One can recognise an Exonuclease domain in the interval 6-171; sequence VVWMDCEMTG…ADIKESIREL (166 aa). Residue Y128 is part of the active site.

Belongs to the oligoribonuclease family.

It is found in the cytoplasm. Functionally, 3'-to-5' exoribonuclease specific for small oligoribonucleotides. This Nocardia farcinica (strain IFM 10152) protein is Oligoribonuclease.